The sequence spans 526 residues: ATP synthase subunit alpha (526 aa).

171–178 (GDRQVGKT) is an ATP binding site.

The protein belongs to the ATPase alpha/beta chains family. In terms of assembly, F-type ATPases have 2 components, CF(1) - the catalytic core - and CF(0) - the membrane proton channel. CF(1) has five subunits: alpha(3), beta(3), gamma(1), delta(1), epsilon(1). CF(0) has three main subunits: a(1), b(2) and c(9-12). The alpha and beta chains form an alternating ring which encloses part of the gamma chain. CF(1) is attached to CF(0) by a central stalk formed by the gamma and epsilon chains, while a peripheral stalk is formed by the delta and b chains.

The protein resides in the cell inner membrane. It carries out the reaction ATP + H2O + 4 H(+)(in) = ADP + phosphate + 5 H(+)(out). Functionally, produces ATP from ADP in the presence of a proton gradient across the membrane. The alpha chain is a regulatory subunit. The sequence is that of ATP synthase subunit alpha from Azobacteroides pseudotrichonymphae genomovar. CFP2.